A 498-amino-acid polypeptide reads, in one-letter code: MCELFVCYKTSIMDLDKLYQLAVNNQFTDIILVLEDDKETIIIGAHKCILYASCPYFEKLFATTMKESIQSRINIRVPNSHVFCNIISGFYGQKIKSGNIEPWKYQLDTILCRDFLGLEITNSLLNDLIVPPENFDDLLKITELIGFDEFAFDLIIKNIPSDYDLTKLSNELLKCLHDHTISQKILFYNNELSVWQQLNIFNYKANDLNLPKDLPVPKSLKNSTYNFEYDLLAYLDNNKRLFVVNIHTNQLTYHIKNMPDTDSIKLISENNLFMVSNNKFAILDLETNQYNKSLEIDNTNFKYSYFCGDIYVCCYEYSIDLYNIVNLELIRTHKLDNKIISLTCSSDNTLIACVCENWNFNMWSIETGELIESATIDDKFTRKFIGINFKYDNNNVIIILNKNCIYQFDIKTGMSTYKTLGWNLSDVIDYSSITNNLILLRCNTNKKNKPDEPVSEDFFVMSNCLDFKYMNLNTNNPLFVQYYTNEVGRKIKSVLGKE.

One can recognise a BTB domain in the interval 28–99; it reads TDIILVLEDD…FYGQKIKSGN (72 aa).

Belongs to the mimivirus BTB/WD family.

The polypeptide is Putative BTB/POZ domain-containing protein L788 (Acanthamoeba polyphaga (Amoeba)).